The chain runs to 276 residues: NADPH-dependent 7-cyano-7-deazaguanine reductase (276 aa).

Residue 83 to 85 coordinates substrate; that stretch reads IES. 85 to 86 serves as a coordination point for NADPH; that stretch reads SK. The active-site Thioimide intermediate is the Cys184. Residue Asp191 is the Proton donor of the active site. 223-224 serves as a coordination point for substrate; the sequence is HE. 252 to 253 is an NADPH binding site; sequence RG.

This sequence belongs to the GTP cyclohydrolase I family. QueF type 2 subfamily. In terms of assembly, homodimer.

It is found in the cytoplasm. The catalysed reaction is 7-aminomethyl-7-carbaguanine + 2 NADP(+) = 7-cyano-7-deazaguanine + 2 NADPH + 3 H(+). It participates in tRNA modification; tRNA-queuosine biosynthesis. Catalyzes the NADPH-dependent reduction of 7-cyano-7-deazaguanine (preQ0) to 7-aminomethyl-7-deazaguanine (preQ1). The polypeptide is NADPH-dependent 7-cyano-7-deazaguanine reductase (Pseudomonas fluorescens (strain Pf0-1)).